Here is a 532-residue protein sequence, read N- to C-terminus: Probable alpha-galactosidase A (532 aa).

Positions 1–21 are cleaved as a signal peptide; the sequence is MDTTKSLLSTLIAIMIPLSLG. Cys-44 and Cys-76 are joined by a disulfide. N-linked (GlcNAc...) asparagine glycans are attached at residues Asn-47, Asn-91, and Asn-121. Cys-124 and Cys-154 are disulfide-bonded. Residue Asp-152 is the Nucleophile of the active site. An N-linked (GlcNAc...) asparagine glycan is attached at Asn-201. Catalysis depends on Asp-210, which acts as the Proton donor. The Ricin B-type lectin domain occupies 410 to 531; sequence CSTVIPTGIV…GLPSGVDIKP (122 aa). Intrachain disulfides connect Cys-427/Cys-441 and Cys-466/Cys-478.

This sequence belongs to the glycosyl hydrolase 27 family.

The protein localises to the secreted. It carries out the reaction Hydrolysis of terminal, non-reducing alpha-D-galactose residues in alpha-D-galactosides, including galactose oligosaccharides, galactomannans and galactolipids.. Its function is as follows. Hydrolyzes a variety of simple alpha-D-galactoside as well as more complex molecules such as oligosaccharides and polysaccharides. The polypeptide is Probable alpha-galactosidase A (aglA) (Aspergillus fumigatus (strain ATCC MYA-4609 / CBS 101355 / FGSC A1100 / Af293) (Neosartorya fumigata)).